The chain runs to 474 residues: tRNA-2-methylthio-N(6)-dimethylallyladenosine synthase (474 aa).

The MTTase N-terminal domain occupies 3–120; that stretch reads QKLHIKTWGC…LPEMINQIRG (118 aa). [4Fe-4S] cluster is bound by residues cysteine 12, cysteine 49, cysteine 83, cysteine 157, cysteine 161, and cysteine 164. In terms of domain architecture, Radical SAM core spans 143–375; that stretch reads RAEGPTAFVS…QQRINNQAAQ (233 aa). The TRAM domain maps to 378–441; it reads RAMLGTEQRV…TNSLRGEVVR (64 aa).

Belongs to the methylthiotransferase family. MiaB subfamily. In terms of assembly, monomer. [4Fe-4S] cluster serves as cofactor.

It localises to the cytoplasm. The catalysed reaction is N(6)-dimethylallyladenosine(37) in tRNA + (sulfur carrier)-SH + AH2 + 2 S-adenosyl-L-methionine = 2-methylsulfanyl-N(6)-dimethylallyladenosine(37) in tRNA + (sulfur carrier)-H + 5'-deoxyadenosine + L-methionine + A + S-adenosyl-L-homocysteine + 2 H(+). In terms of biological role, catalyzes the methylthiolation of N6-(dimethylallyl)adenosine (i(6)A), leading to the formation of 2-methylthio-N6-(dimethylallyl)adenosine (ms(2)i(6)A) at position 37 in tRNAs that read codons beginning with uridine. The sequence is that of tRNA-2-methylthio-N(6)-dimethylallyladenosine synthase from Histophilus somni (strain 129Pt) (Haemophilus somnus).